We begin with the raw amino-acid sequence, 538 residues long: Phosphoenolpyruvate carboxykinase (ATP) (538 aa).

Residues R64, Y205, and K211 each contribute to the substrate site. Residues K211, H230, and 246 to 254 contribute to the ATP site; that span reads GLSGTGKTT. 2 residues coordinate Mn(2+): K211 and H230. D267 lines the Mn(2+) pocket. Residues E295, R331, 447 to 448, and T453 contribute to the ATP site; that span reads RI. R331 contacts substrate.

It belongs to the phosphoenolpyruvate carboxykinase (ATP) family. Monomer. Mn(2+) is required as a cofactor.

It is found in the cytoplasm. It catalyses the reaction oxaloacetate + ATP = phosphoenolpyruvate + ADP + CO2. It participates in carbohydrate biosynthesis; gluconeogenesis. Functionally, involved in the gluconeogenesis. Catalyzes the conversion of oxaloacetate (OAA) to phosphoenolpyruvate (PEP) through direct phosphoryl transfer between the nucleoside triphosphate and OAA. The protein is Phosphoenolpyruvate carboxykinase (ATP) of Haemophilus influenzae (strain 86-028NP).